Reading from the N-terminus, the 264-residue chain is Synaptophysin-like protein 2 (264 aa).

Over 1–33 (MSSTESPSRAADKSPRQQVDRLLEGLRWRRLEE) the chain is Cytoplasmic. The MARVEL domain maps to 30–238 (RLEEPLGFIK…NCWFVFKETP (209 aa)). The helical transmembrane segment at 34-54 (PLGFIKVLQWLFAIFAFGSCG) threads the bilayer. Residues 55–116 (SYSGETGAMV…LMGDFSAPAE (62 aa)) are Vesicular-facing. Residues 117-137 (FFVTLGIFSFFYTMAALVVYL) traverse the membrane as a helical segment. The Cytoplasmic portion of the chain corresponds to 138-150 (RFHKLYTENKRFP). The chain crosses the membrane as a helical span at residues 151–171 (LVDFCVTVSFTFFWLVAAAAW). The Vesicular segment spans residues 172–213 (GKGLTDVKGATRPSSLTAAMSVCHGEEAVCSAGATPSMGLAN). Residue Asn-213 is glycosylated (N-linked (GlcNAc...) asparagine). Residues 214-234 (ISVLFGFINFFLWAGNCWFVF) form a helical membrane-spanning segment. Residues 235–264 (KETPWHGQGQDQGQGPSQESAAEQGAVEKQ) lie on the Cytoplasmic side of the membrane. A disordered region spans residues 242–264 (QGQDQGQGPSQESAAEQGAVEKQ).

This sequence belongs to the synaptophysin/synaptobrevin family. In terms of tissue distribution, skeletal muscle.

Its subcellular location is the membrane. Its function is as follows. Involved in communication between the T-tubular and junctional sarcoplasmic reticulum (SR) membranes. The polypeptide is Synaptophysin-like protein 2 (SYPL2) (Oryctolagus cuniculus (Rabbit)).